We begin with the raw amino-acid sequence, 199 residues long: Fe/S biogenesis protein NfuA (199 aa).

[4Fe-4S] cluster-binding residues include Cys-151 and Cys-154.

This sequence belongs to the NfuA family. As to quaternary structure, homodimer. [4Fe-4S] cluster is required as a cofactor.

Functionally, involved in iron-sulfur cluster biogenesis. Binds a 4Fe-4S cluster, can transfer this cluster to apoproteins, and thereby intervenes in the maturation of Fe/S proteins. Could also act as a scaffold/chaperone for damaged Fe/S proteins. The sequence is that of Fe/S biogenesis protein NfuA from Xanthomonas euvesicatoria pv. vesicatoria (strain 85-10) (Xanthomonas campestris pv. vesicatoria).